Here is a 358-residue protein sequence, read N- to C-terminus: Protein RecA 2 (358 aa).

69–76 (GPESSGKT) is an ATP binding site. A disordered region spans residues 331–358 (GIGKSGAPSPRRRTSPRRPKVAARSAAV). Positions 340–351 (PRRRTSPRRPKV) are enriched in basic residues.

This sequence belongs to the RecA family.

Its subcellular location is the cytoplasm. Functionally, can catalyze the hydrolysis of ATP in the presence of single-stranded DNA, the ATP-dependent uptake of single-stranded DNA by duplex DNA, and the ATP-dependent hybridization of homologous single-stranded DNAs. It interacts with LexA causing its activation and leading to its autocatalytic cleavage. This Myxococcus xanthus protein is Protein RecA 2.